The sequence spans 384 residues: Autophagy-related protein 25 (384 aa).

Coiled coils occupy residues Lys-132 to Ser-236 and Lys-342 to Thr-379. The segment at Glu-224–Arg-247 is disordered. Residues Ser-236–Arg-247 show a composition bias toward basic and acidic residues.

Belongs to the ADIP family.

Its subcellular location is the preautophagosomal structure membrane. Its function is as follows. Specifically required for selective degradation of peroxisomes via macropexophagy. The polypeptide is Autophagy-related protein 25 (ATG25) (Pichia angusta (Yeast)).